A 326-amino-acid polypeptide reads, in one-letter code: Protein GVP36 (326 aa).

Ser2 carries the N-acetylserine modification. Ser2 is modified (phosphoserine). Glycyl lysine isopeptide (Lys-Gly) (interchain with G-Cter in ubiquitin) cross-links involve residues Lys13, Lys305, and Lys313. The disordered stretch occupies residues 299 to 326 (AEEPEAKPEVAEEEKPQTAISMNDEDDA). Basic and acidic residues predominate over residues 302 to 314 (PEAKPEVAEEEKP). The residue at position 319 (Ser319) is a Phosphoserine.

It is found in the golgi apparatus membrane. This Saccharomyces cerevisiae (strain ATCC 204508 / S288c) (Baker's yeast) protein is Protein GVP36 (GVP36).